We begin with the raw amino-acid sequence, 159 residues long: RNA pyrophosphohydrolase (159 aa).

The Nudix hydrolase domain occupies 6-149 (GFRPNVGIIL…KREVYRRALK (144 aa)). The Nudix box signature appears at 38–59 (GGINPDETPEDALYRELNEEVG).

Belongs to the Nudix hydrolase family. RppH subfamily. A divalent metal cation serves as cofactor.

Functionally, accelerates the degradation of transcripts by removing pyrophosphate from the 5'-end of triphosphorylated RNA, leading to a more labile monophosphorylated state that can stimulate subsequent ribonuclease cleavage. The chain is RNA pyrophosphohydrolase from Pseudomonas entomophila (strain L48).